The primary structure comprises 286 residues: Bifunctional protein FolD (286 aa).

Residues 165-167 (GRS) and Ser190 each bind NADP(+).

The protein belongs to the tetrahydrofolate dehydrogenase/cyclohydrolase family. As to quaternary structure, homodimer.

The enzyme catalyses (6R)-5,10-methylene-5,6,7,8-tetrahydrofolate + NADP(+) = (6R)-5,10-methenyltetrahydrofolate + NADPH. The catalysed reaction is (6R)-5,10-methenyltetrahydrofolate + H2O = (6R)-10-formyltetrahydrofolate + H(+). The protein operates within one-carbon metabolism; tetrahydrofolate interconversion. Functionally, catalyzes the oxidation of 5,10-methylenetetrahydrofolate to 5,10-methenyltetrahydrofolate and then the hydrolysis of 5,10-methenyltetrahydrofolate to 10-formyltetrahydrofolate. The sequence is that of Bifunctional protein FolD from Burkholderia orbicola (strain MC0-3).